The primary structure comprises 404 residues: Argininosuccinate synthase (404 aa).

ATP contacts are provided by residues Ala-12–Ser-20 and Ala-39. L-citrulline is bound by residues Tyr-90 and Ser-95. Gly-120 lines the ATP pocket. L-aspartate contacts are provided by Thr-122, Asn-126, and Asp-127. L-citrulline is bound at residue Asn-126. Residues Arg-130, Ser-181, Ser-190, Glu-266, and Tyr-278 each contribute to the L-citrulline site.

It belongs to the argininosuccinate synthase family. Type 1 subfamily. As to quaternary structure, homotetramer.

Its subcellular location is the cytoplasm. It catalyses the reaction L-citrulline + L-aspartate + ATP = 2-(N(omega)-L-arginino)succinate + AMP + diphosphate + H(+). It functions in the pathway amino-acid biosynthesis; L-arginine biosynthesis; L-arginine from L-ornithine and carbamoyl phosphate: step 2/3. The polypeptide is Argininosuccinate synthase (Rhodospirillum rubrum (strain ATCC 11170 / ATH 1.1.1 / DSM 467 / LMG 4362 / NCIMB 8255 / S1)).